We begin with the raw amino-acid sequence, 231 residues long: Probable septum site-determining protein MinC (231 aa).

It belongs to the MinC family. Interacts with MinD and FtsZ.

Its function is as follows. Cell division inhibitor that blocks the formation of polar Z ring septums. Rapidly oscillates between the poles of the cell to destabilize FtsZ filaments that have formed before they mature into polar Z rings. Prevents FtsZ polymerization. The sequence is that of Probable septum site-determining protein MinC from Bradyrhizobium diazoefficiens (strain JCM 10833 / BCRC 13528 / IAM 13628 / NBRC 14792 / USDA 110).